Reading from the N-terminus, the 235-residue chain is LexA repressor (235 aa).

The segment at residues 26–46 (FDEMKDALDLKSKSGIHRLIT) is a DNA-binding region (H-T-H motif). Catalysis depends on for autocatalytic cleavage activity residues serine 156 and lysine 194.

The protein belongs to the peptidase S24 family. As to quaternary structure, homodimer.

The enzyme catalyses Hydrolysis of Ala-|-Gly bond in repressor LexA.. Functionally, represses a number of genes involved in the response to DNA damage (SOS response), including recA and lexA. In the presence of single-stranded DNA, RecA interacts with LexA causing an autocatalytic cleavage which disrupts the DNA-binding part of LexA, leading to derepression of the SOS regulon and eventually DNA repair. This Paramagnetospirillum magneticum (strain ATCC 700264 / AMB-1) (Magnetospirillum magneticum) protein is LexA repressor.